The sequence spans 371 residues: uncharacterized protein (371 aa).

His-76 contributes to the Zn(2+) binding site. Asp-78 is a catalytic residue. Asp-106 contacts Zn(2+). Glu-139 acts as the Proton acceptor in catalysis. The Zn(2+) site is built by Glu-140, Asp-163, and His-344.

The protein belongs to the peptidase M20A family. The cofactor is Zn(2+).

Its function is as follows. Could be a peptidase. This is an uncharacterized protein from Bacillus subtilis (strain 168).